A 288-amino-acid polypeptide reads, in one-letter code: Beta-lactamase PSE-4 (288 aa).

The signal sequence occupies residues 1–17 (MKFLLAFSLLIPSVVFA). S65 acts as the Acyl-ester intermediate in catalysis. C72 and C118 are oxidised to a cystine. 229-231 (RSG) lines the substrate pocket.

It belongs to the class-A beta-lactamase family.

The catalysed reaction is a beta-lactam + H2O = a substituted beta-amino acid. Functionally, hydrolyzes both carbenicillin and oxacillin. This Pseudomonas aeruginosa protein is Beta-lactamase PSE-4 (pse4).